We begin with the raw amino-acid sequence, 148 residues long: Protein NrdI (148 aa).

It belongs to the NrdI family.

Its function is as follows. Probably involved in ribonucleotide reductase function. In Mycolicibacterium gilvum (strain PYR-GCK) (Mycobacterium gilvum (strain PYR-GCK)), this protein is Protein NrdI.